A 999-amino-acid chain; its full sequence is Bifunctional glutamine synthetase adenylyltransferase/adenylyl-removing enzyme (999 aa).

The segment at 1 to 483 (MTPGRRSSTF…LHEKLFYRPL (483 aa)) is adenylyl removase. Positions 489–999 (QLAPGEARLS…RTVVEDLFYA (511 aa)) are adenylyl transferase.

It belongs to the GlnE family. Mg(2+) serves as cofactor.

It catalyses the reaction [glutamine synthetase]-O(4)-(5'-adenylyl)-L-tyrosine + phosphate = [glutamine synthetase]-L-tyrosine + ADP. It carries out the reaction [glutamine synthetase]-L-tyrosine + ATP = [glutamine synthetase]-O(4)-(5'-adenylyl)-L-tyrosine + diphosphate. Its function is as follows. Adenylation and deadenylation of glutamate--ammonia ligase. Involved in the regulation of glutamine synthetase GlnA, a key enzyme in the process to assimilate ammonia. When cellular nitrogen levels are high, the C-terminal adenylyl transferase (AT) inactivates GlnA by covalent transfer of an adenylyl group from ATP to specific tyrosine residue of GlnA, thus reducing its activity. Conversely, when nitrogen levels are low, the N-terminal adenylyl removase (AR) activates GlnA by removing the adenylyl group by phosphorolysis, increasing its activity. The regulatory region of GlnE binds the signal transduction protein PII (GlnB) which indicates the nitrogen status of the cell. In Streptomyces coelicolor (strain ATCC BAA-471 / A3(2) / M145), this protein is Bifunctional glutamine synthetase adenylyltransferase/adenylyl-removing enzyme.